The chain runs to 177 residues: SKP1-like protein 15 (177 aa).

An interaction with the F-box domain of F-box proteins region spans residues I108–E167.

Belongs to the SKP1 family. As to quaternary structure, part of a SCF (SKP1-cullin-F-box) protein ligase complex. In terms of tissue distribution, expressed at low levels in seedlings and leaves.

It is found in the nucleus. Its pathway is protein modification; protein ubiquitination. Involved in ubiquitination and subsequent proteasomal degradation of target proteins. Together with CUL1, RBX1 and a F-box protein, it forms a SCF E3 ubiquitin ligase complex. The functional specificity of this complex depends on the type of F-box protein. In the SCF complex, it serves as an adapter that links the F-box protein to CUL1. The chain is SKP1-like protein 15 (ASK15) from Arabidopsis thaliana (Mouse-ear cress).